The sequence spans 490 residues: Cysteine--tRNA ligase (490 aa).

Zn(2+) is bound at residue cysteine 43. Positions 45-55 (MTVQSSPHLGH) match the 'HIGH' region motif. Positions 177–204 (VDEMSPAEDSDPRGKRDPRDFALWKGHK) are disordered. Basic and acidic residues predominate over residues 186-204 (SDPRGKRDPRDFALWKGHK). Cysteine 228, histidine 253, and glutamate 257 together coordinate Zn(2+). The 'KMSKS' region signature appears at 284–288 (KMSKS). Lysine 287 provides a ligand contact to ATP.

Belongs to the class-I aminoacyl-tRNA synthetase family. As to quaternary structure, monomer. Zn(2+) serves as cofactor.

It is found in the cytoplasm. It carries out the reaction tRNA(Cys) + L-cysteine + ATP = L-cysteinyl-tRNA(Cys) + AMP + diphosphate. The chain is Cysteine--tRNA ligase from Cutibacterium acnes (strain DSM 16379 / KPA171202) (Propionibacterium acnes).